A 131-amino-acid polypeptide reads, in one-letter code: Small ribosomal subunit protein uS8 (131 aa).

Belongs to the universal ribosomal protein uS8 family. Part of the 30S ribosomal subunit. Contacts proteins S5 and S12.

One of the primary rRNA binding proteins, it binds directly to 16S rRNA central domain where it helps coordinate assembly of the platform of the 30S subunit. The polypeptide is Small ribosomal subunit protein uS8 (Sorangium cellulosum (strain So ce56) (Polyangium cellulosum (strain So ce56))).